A 396-amino-acid polypeptide reads, in one-letter code: uncharacterized protein (396 aa).

4 residues coordinate [4Fe-4S] cluster: cysteine 8, cysteine 14, cysteine 17, and cysteine 95. Residues glutamine 229, tyrosine 258, glutamate 279, and aspartate 325 each coordinate S-adenosyl-L-methionine. The active-site Nucleophile is cysteine 352.

Belongs to the class I-like SAM-binding methyltransferase superfamily. RNA M5U methyltransferase family.

This is an uncharacterized protein from Chlamydia trachomatis serovar D (strain ATCC VR-885 / DSM 19411 / UW-3/Cx).